Here is a 408-residue protein sequence, read N- to C-terminus: Peptidase T (408 aa).

His-78 contacts Zn(2+). The active site involves Asp-80. Asp-140 provides a ligand contact to Zn(2+). Catalysis depends on Glu-173, which acts as the Proton acceptor. Zn(2+) contacts are provided by Glu-174, Asp-196, and His-379.

This sequence belongs to the peptidase M20B family. Zn(2+) is required as a cofactor.

The protein resides in the cytoplasm. The catalysed reaction is Release of the N-terminal residue from a tripeptide.. Its function is as follows. Cleaves the N-terminal amino acid of tripeptides. This chain is Peptidase T, found in Shigella flexneri serotype 5b (strain 8401).